The chain runs to 431 residues: Glutamate-1-semialdehyde 2,1-aminomutase (431 aa).

Lys-265 bears the N6-(pyridoxal phosphate)lysine mark.

This sequence belongs to the class-III pyridoxal-phosphate-dependent aminotransferase family. HemL subfamily. As to quaternary structure, homodimer. Pyridoxal 5'-phosphate is required as a cofactor.

The protein resides in the cytoplasm. It catalyses the reaction (S)-4-amino-5-oxopentanoate = 5-aminolevulinate. It functions in the pathway porphyrin-containing compound metabolism; protoporphyrin-IX biosynthesis; 5-aminolevulinate from L-glutamyl-tRNA(Glu): step 2/2. This Aliivibrio fischeri (strain MJ11) (Vibrio fischeri) protein is Glutamate-1-semialdehyde 2,1-aminomutase.